Consider the following 1122-residue polypeptide: Midnolin homolog (1122 aa).

The 75-residue stretch at 69 to 143 (INLNISTTTG…IILIPNVETG (75 aa)) folds into the Ubiquitin-like domain. The segment at 210–300 (GGASGSSINA…SGQRSSGRIG (91 aa)) is required for interaction with Pc. 8 disordered regions span residues 257 to 399 (VGGS…STLN), 596 to 630 (KHRH…HFFN), 645 to 677 (FATS…GAGA), 746 to 775 (GVVS…KSGS), 840 to 876 (APTT…RSKM), 886 to 905 (KCNS…ASGS), 922 to 955 (AATK…NGCT), and 1067 to 1122 (AAPA…DTAA). Residues 266–298 (SGTSSSSSSTSSSSSSSSSSSRTRSSGQRSSGR) show a composition bias toward low complexity. Composition is skewed to basic residues over residues 300–310 (GHGHVHSHQHP) and 321–352 (SHGH…HHHN). Over residues 375–397 (PSSSGASGSAPATGTGQSQSSST) the composition is skewed to low complexity. A compositionally biased stretch (basic residues) spans 596-610 (KHRHYHGQGHGHGHG). 6 stretches are compositionally biased toward low complexity: residues 612-627 (GHSS…SSSH), 648-663 (SSSS…SSSP), 746-766 (GVVS…AASG), 856-867 (SGSSSTTSSGSG), 889-903 (SRAQ…TLAS), and 922-936 (AATK…SSHS). 2 stretches are compositionally biased toward polar residues: residues 937-954 (CCQT…SNGC) and 1071-1085 (NSIT…VNGN). Over residues 1086–1107 (TSTAPATAATSAAAAPTAAPPS) the composition is skewed to low complexity.

In terms of assembly, interacts with PRC1 complex member polycomb protein Pc; the interaction targets Pc for ubiquitin-independent proteasomal degradation. Does not interact with PRC1 members Ph, Psc or Sce so does not appear to be a member of the PRC1 complex. Interacts with 26S proteasome regulatory subunit Rpn10.

It localises to the nucleus. Facilitates ubiquitin-independent proteasomal degradation of polycomb protein Pc by interacting directly with the proteasome and recruiting Pc to it. The polypeptide is Midnolin homolog (Drosophila melanogaster (Fruit fly)).